We begin with the raw amino-acid sequence, 372 residues long: Glutamate 5-kinase (372 aa).

ATP is bound at residue lysine 14. Positions 54, 141, and 153 each coordinate substrate. 173 to 174 is an ATP binding site; sequence TD. Residues 280–358 enclose the PUA domain; the sequence is RGHVVIDAGA…GEIETVLGYM (79 aa).

Belongs to the glutamate 5-kinase family.

It is found in the cytoplasm. It catalyses the reaction L-glutamate + ATP = L-glutamyl 5-phosphate + ADP. The protein operates within amino-acid biosynthesis; L-proline biosynthesis; L-glutamate 5-semialdehyde from L-glutamate: step 1/2. Catalyzes the transfer of a phosphate group to glutamate to form L-glutamate 5-phosphate. This Burkholderia ambifaria (strain ATCC BAA-244 / DSM 16087 / CCUG 44356 / LMG 19182 / AMMD) (Burkholderia cepacia (strain AMMD)) protein is Glutamate 5-kinase.